A 641-amino-acid polypeptide reads, in one-letter code: Macrolide export ATP-binding/permease protein MacB (641 aa).

One can recognise an ABC transporter domain in the interval 2 to 236 (IFLKNICKNI…LTLKTMSKEK (235 aa)). Residue 34–41 (GQSGSGKT) participates in ATP binding. Transmembrane regions (helical) follow at residues 265–285 (ILTM…VALG), 519–539 (ACVA…IMLV), 571–591 (MICT…IFAF), and 604–624 (AYSV…FGFF).

This sequence belongs to the ABC transporter superfamily. Macrolide exporter (TC 3.A.1.122) family. As to quaternary structure, homodimer.

It localises to the cell inner membrane. Non-canonical ABC transporter that contains transmembrane domains (TMD), which form a pore in the inner membrane, and an ATP-binding domain (NBD), which is responsible for energy generation. Confers resistance against macrolides. The chain is Macrolide export ATP-binding/permease protein MacB from Campylobacter jejuni subsp. jejuni serotype O:23/36 (strain 81-176).